The primary structure comprises 140 residues: uncharacterized protein (140 aa).

Repeat copies occupy residues 1–10, 11–20, 21–30, 31–40, 41–50, 51–60, 61–70, 71–80, 81–90, 91–100, 101–110, 111–120, 121–130, and 131–140. The interval 1-140 is 14 X 10 AA tandem repeats of [MT]-F-[AG]-R-L-[CS]-P-V-[SI]-[ET]; the sequence is MFARLCPVSE…MFGRLCPVIT (140 aa).

This is an uncharacterized protein from Homo sapiens (Human).